The following is a 70-amino-acid chain: uncharacterized protein (70 aa).

A helical membrane pass occupies residues 50–70 (INVVLVLIIALIIFILMLDGV).

Its subcellular location is the membrane. This is an uncharacterized protein from Dictyostelium discoideum (Social amoeba).